Consider the following 1128-residue polypeptide: Major DNA-binding protein (1128 aa).

A required for nuclear localization region spans residues 1104-1128 (LGGGGQGSGGRRKRRLATVLPGLEV).

Belongs to the herpesviridae major DNA-binding protein family. In terms of assembly, homooligomers. Forms double-helical filaments necessary for the formation of replication compartments within the host nucleus. Interacts with the origin-binding protein. Interacts with the helicase primase complex; this interaction stimulates primer synthesis activity of the helicase-primase complex. Interacts with the DNA polymerase. Interacts with the alkaline exonuclease; this interaction increases its nuclease processivity.

Its subcellular location is the virion tegument. The protein localises to the host nucleus. Functionally, plays several crucial roles in viral infection. Participates in the opening of the viral DNA origin to initiate replication by interacting with the origin-binding protein. May disrupt loops, hairpins and other secondary structures present on ssDNA to reduce and eliminate pausing of viral DNA polymerase at specific sites during elongation. Promotes viral DNA recombination by performing strand-transfer, characterized by the ability to transfer a DNA strand from a linear duplex to a complementary single-stranded DNA circle. Can also catalyze the renaturation of complementary single strands. Additionally, reorganizes the host cell nucleus, leading to the formation of prereplicative sites and replication compartments. This process is driven by the protein which can form double-helical filaments in the absence of DNA. The sequence is that of Major DNA-binding protein from Homo sapiens (Human).